The sequence spans 403 residues: Serine/threonine transporter SstT (403 aa).

Helical transmembrane passes span 14–34 (VTQI…APAI), 44–64 (VFVS…VMAS), 79–99 (ILWL…VASM), 138–158 (ALLN…GVAL), 175–195 (GVTL…FGLV), 214–234 (LAVL…LIVF), 295–315 (MAGA…TLGI), 327–347 (VVAA…LLLI), and 353–373 (LFGI…IIGV).

It belongs to the dicarboxylate/amino acid:cation symporter (DAACS) (TC 2.A.23) family.

The protein resides in the cell inner membrane. The enzyme catalyses L-serine(in) + Na(+)(in) = L-serine(out) + Na(+)(out). It catalyses the reaction L-threonine(in) + Na(+)(in) = L-threonine(out) + Na(+)(out). In terms of biological role, involved in the import of serine and threonine into the cell, with the concomitant import of sodium (symport system). The polypeptide is Serine/threonine transporter SstT (Pseudomonas putida (strain ATCC 700007 / DSM 6899 / JCM 31910 / BCRC 17059 / LMG 24140 / F1)).